A 398-amino-acid polypeptide reads, in one-letter code: Enolase (398 aa).

Residue Gln-154 coordinates (2R)-2-phosphoglycerate. The Proton donor role is filled by Glu-196. Mg(2+) contacts are provided by Asp-232, Glu-273, and Asp-300. Residues Lys-325, Arg-354, Ser-355, and Lys-376 each contribute to the (2R)-2-phosphoglycerate site. Lys-325 functions as the Proton acceptor in the catalytic mechanism.

Belongs to the enolase family. The cofactor is Mg(2+).

It is found in the cytoplasm. Its subcellular location is the secreted. The protein resides in the cell surface. It carries out the reaction (2R)-2-phosphoglycerate = phosphoenolpyruvate + H2O. The protein operates within carbohydrate degradation; glycolysis; pyruvate from D-glyceraldehyde 3-phosphate: step 4/5. Its function is as follows. Catalyzes the reversible conversion of 2-phosphoglycerate (2-PG) into phosphoenolpyruvate (PEP). It is essential for the degradation of carbohydrates via glycolysis. The sequence is that of Enolase from Halobacterium salinarum (strain ATCC 700922 / JCM 11081 / NRC-1) (Halobacterium halobium).